The sequence spans 562 residues: Formate--tetrahydrofolate ligase (562 aa).

An ATP-binding site is contributed by 71-78; that stretch reads TPAGEGKS.

This sequence belongs to the formate--tetrahydrofolate ligase family.

It catalyses the reaction (6S)-5,6,7,8-tetrahydrofolate + formate + ATP = (6R)-10-formyltetrahydrofolate + ADP + phosphate. It participates in one-carbon metabolism; tetrahydrofolate interconversion. The chain is Formate--tetrahydrofolate ligase from Bacillus cereus (strain ATCC 10987 / NRS 248).